We begin with the raw amino-acid sequence, 88 residues long: Small ribosomal subunit protein uS17 (88 aa).

The protein belongs to the universal ribosomal protein uS17 family. Part of the 30S ribosomal subunit.

Its function is as follows. One of the primary rRNA binding proteins, it binds specifically to the 5'-end of 16S ribosomal RNA. The chain is Small ribosomal subunit protein uS17 from Syntrophotalea carbinolica (strain DSM 2380 / NBRC 103641 / GraBd1) (Pelobacter carbinolicus).